We begin with the raw amino-acid sequence, 115 residues long: Large ribosomal subunit protein uL22 (115 aa).

This sequence belongs to the universal ribosomal protein uL22 family. In terms of assembly, part of the 50S ribosomal subunit.

Functionally, this protein binds specifically to 23S rRNA; its binding is stimulated by other ribosomal proteins, e.g. L4, L17, and L20. It is important during the early stages of 50S assembly. It makes multiple contacts with different domains of the 23S rRNA in the assembled 50S subunit and ribosome. In terms of biological role, the globular domain of the protein is located near the polypeptide exit tunnel on the outside of the subunit, while an extended beta-hairpin is found that lines the wall of the exit tunnel in the center of the 70S ribosome. This is Large ribosomal subunit protein uL22 (rplV) from Wolbachia pipientis wMel.